The chain runs to 20 residues: Protein PR-L5 (20 aa).

Belongs to the BetVI family.

The sequence is that of Protein PR-L5 from Lupinus luteus (European yellow lupine).